The sequence spans 119 residues: Beta-2-microglobulin (119 aa).

Positions 1–20 (MARFVVVALLVLLSLSGLEA) are cleaved as a signal peptide. Residues 25 to 114 (PKIQVYSRHP…VTLSTPKTVK (90 aa)) enclose the Ig-like C1-type domain. C45 and C100 are oxidised to a cystine.

The protein belongs to the beta-2-microglobulin family. As to quaternary structure, heterodimer of an alpha chain and a beta chain. Beta-2-microglobulin is the beta-chain of major histocompatibility complex class I molecules.

It localises to the secreted. Functionally, component of the class I major histocompatibility complex (MHC). Involved in the presentation of peptide antigens to the immune system. The sequence is that of Beta-2-microglobulin (B2M) from Aotus lemurinus (Gray-bellied night monkey).